The sequence spans 132 residues: Fatty acid-binding protein, intestinal (132 aa).

A2 bears the N-acetylalanine mark. Residues W83 and R107 each coordinate hexadecanoate. Residues W83 and R107 each contribute to the tetradecanoate site.

Belongs to the calycin superfamily. Fatty-acid binding protein (FABP) family.

Its subcellular location is the cytoplasm. Its function is as follows. FABPs are thought to play a role in the intracellular transport of long-chain fatty acids and their acyl-CoA esters. The polypeptide is Fatty acid-binding protein, intestinal (fabp2) (Xenopus laevis (African clawed frog)).